Here is a 338-residue protein sequence, read N- to C-terminus: Phenylalanine--tRNA ligase alpha subunit (338 aa).

Position 252 (glutamate 252) interacts with Mg(2+).

The protein belongs to the class-II aminoacyl-tRNA synthetase family. Phe-tRNA synthetase alpha subunit type 1 subfamily. As to quaternary structure, tetramer of two alpha and two beta subunits. Requires Mg(2+) as cofactor.

It localises to the cytoplasm. The catalysed reaction is tRNA(Phe) + L-phenylalanine + ATP = L-phenylalanyl-tRNA(Phe) + AMP + diphosphate + H(+). The chain is Phenylalanine--tRNA ligase alpha subunit from Azotobacter vinelandii (strain DJ / ATCC BAA-1303).